Here is a 172-residue protein sequence, read N- to C-terminus: uncharacterized protein (172 aa).

Residues 22–64 (RSVSSSPAAKQPAPGTVAQSFPPGELALRDETGGRGRGTRGIR) are disordered.

This is an uncharacterized protein from Human cytomegalovirus (strain AD169) (HHV-5).